The following is a 183-amino-acid chain: Oleosin-B2 (183 aa).

The tract at residues 1–23 (QASIFSRFFRMFSFIFPFVNVIK) is polar. Transmembrane regions (helical) follow at residues 24–44 (LIIA…ALGG), 46–66 (AVAL…LVPA), and 72–92 (LLAS…GLIM). The segment at 24–95 (LIIASVTSLV…TGIGLIMGLV (72 aa)) is hydrophobic.

Belongs to the oleosin family. As to expression, the full-length protein is found in the tapetal lipid bodies of immature anthers, the proteolytically cleaved C-terminal product is found on the coats of pollen grains. Not present in seeds.

It is found in the lipid droplet. The protein localises to the membrane. Many of the major pollen coat proteins are derived from endoproteolytic cleavage of oleosin-like proteins. This Brassica napus (Rape) protein is Oleosin-B2 (OlnB2).